The sequence spans 479 residues: Splicing factor ESS-2 homolog (479 aa).

N-acetylmethionine is present on M1. Disordered stretches follow at residues M1–Q38 and G95–D152. At T3 the chain carries Phosphothreonine. Residues S7–P19 are compositionally biased toward low complexity. Residues D135–K145 show a composition bias toward acidic residues. K145 participates in a covalent cross-link: Glycyl lysine isopeptide (Lys-Gly) (interchain with G-Cter in SUMO2). Phosphoserine is present on S295. T389 carries the phosphothreonine modification. S394 and S398 each carry phosphoserine. A disordered region spans residues R415–F479. Low complexity predominate over residues T433–P454. Over residues L455–L466 the composition is skewed to polar residues.

Belongs to the ESS2 family. As to quaternary structure, identified in the spliceosome C complex. Interacts with FRA10AC1. As to expression, in the adult, widely expressed with highest expression in the testis and brain. Also widely expressed in the embryo with highest levels in the anterior pons.

Its subcellular location is the nucleus. Its function is as follows. May be involved in pre-mRNA splicing. The polypeptide is Splicing factor ESS-2 homolog (Ess2) (Mus musculus (Mouse)).